The following is a 312-amino-acid chain: tRNA-cytidine(32) 2-sulfurtransferase (312 aa).

The PP-loop motif motif lies at 48 to 53; sequence SGGKDS. Residues Cys-123, Cys-126, and Cys-214 each coordinate [4Fe-4S] cluster.

This sequence belongs to the TtcA family. Homodimer. Requires Mg(2+) as cofactor. [4Fe-4S] cluster is required as a cofactor.

Its subcellular location is the cytoplasm. It carries out the reaction cytidine(32) in tRNA + S-sulfanyl-L-cysteinyl-[cysteine desulfurase] + AH2 + ATP = 2-thiocytidine(32) in tRNA + L-cysteinyl-[cysteine desulfurase] + A + AMP + diphosphate + H(+). It participates in tRNA modification. In terms of biological role, catalyzes the ATP-dependent 2-thiolation of cytidine in position 32 of tRNA, to form 2-thiocytidine (s(2)C32). The sulfur atoms are provided by the cysteine/cysteine desulfurase (IscS) system. In Mannheimia succiniciproducens (strain KCTC 0769BP / MBEL55E), this protein is tRNA-cytidine(32) 2-sulfurtransferase.